Consider the following 137-residue polypeptide: Endoribonuclease YbeY (137 aa).

3 residues coordinate Zn(2+): histidine 107, histidine 111, and aspartate 117.

This sequence belongs to the endoribonuclease YbeY family. Requires Zn(2+) as cofactor.

It localises to the cytoplasm. Single strand-specific metallo-endoribonuclease involved in late-stage 70S ribosome quality control and in maturation of the 3' terminus of the 16S rRNA. The polypeptide is Endoribonuclease YbeY (Bacteroides thetaiotaomicron (strain ATCC 29148 / DSM 2079 / JCM 5827 / CCUG 10774 / NCTC 10582 / VPI-5482 / E50)).